We begin with the raw amino-acid sequence, 360 residues long: MLYHLLTPLAKYMTVFNVFRYITFRTIYASLTALVISFVLGPWLIRKLGEMQVGQHIREDGPQTHLKKAGTPTMGGVLIMSAVMFSTLLWADLTNAYVWIALGVTFGFGLIGFVDDYLMQVKKRSKGLSARGKFCLQVVVAGIAGTVLVYGLNGDTTVNIPFFKNLNPDLTRPGYVLFAILVMVGASNAVNLTDGLDGLAIVPVAIAAGTYMIFAYVASHYDFATYLSIRHVPQSGEMSVFCGALVGAGLGFLWYNAYPAQIFMGDVGSLPLGGALGVVAILTKQELALVIVGGLFVMEAVSVILQVSFFKITKGKRIFKMAPIHHHFELKGWPEPKVIVRFWIIAIMLALLSVSTLKLR.

Helical transmembrane passes span 25-45 (RTIY…PWLI), 73-93 (TMGG…WADL), 94-114 (TNAY…IGFV), 134-154 (FCLQ…GLNG), 173-193 (PGYV…VNLT), 198-218 (GLAI…AYVA), 240-260 (VFCG…AYPA), 262-282 (IFMG…VAIL), 287-307 (LALV…ILQV), and 337-357 (KVIV…VSTL).

It belongs to the glycosyltransferase 4 family. MraY subfamily. Mg(2+) serves as cofactor.

It localises to the cell inner membrane. The enzyme catalyses UDP-N-acetyl-alpha-D-muramoyl-L-alanyl-gamma-D-glutamyl-meso-2,6-diaminopimeloyl-D-alanyl-D-alanine + di-trans,octa-cis-undecaprenyl phosphate = di-trans,octa-cis-undecaprenyl diphospho-N-acetyl-alpha-D-muramoyl-L-alanyl-D-glutamyl-meso-2,6-diaminopimeloyl-D-alanyl-D-alanine + UMP. It functions in the pathway cell wall biogenesis; peptidoglycan biosynthesis. Its function is as follows. Catalyzes the initial step of the lipid cycle reactions in the biosynthesis of the cell wall peptidoglycan: transfers peptidoglycan precursor phospho-MurNAc-pentapeptide from UDP-MurNAc-pentapeptide onto the lipid carrier undecaprenyl phosphate, yielding undecaprenyl-pyrophosphoryl-MurNAc-pentapeptide, known as lipid I. This is Phospho-N-acetylmuramoyl-pentapeptide-transferase from Desulfatibacillum aliphaticivorans.